A 124-amino-acid chain; its full sequence is Glycine cleavage system H protein (124 aa).

A Lipoyl-binding domain is found at 19-101 (TGTVGITDYA…AGKGWFLQIK (83 aa)). Lys-60 carries the N6-lipoyllysine modification.

This sequence belongs to the GcvH family. The glycine cleavage system is composed of four proteins: P, T, L and H. (R)-lipoate is required as a cofactor.

The glycine cleavage system catalyzes the degradation of glycine. The H protein shuttles the methylamine group of glycine from the P protein to the T protein. The polypeptide is Glycine cleavage system H protein (Beijerinckia indica subsp. indica (strain ATCC 9039 / DSM 1715 / NCIMB 8712)).